Consider the following 327-residue polypeptide: Movement protein (327 aa).

The stretch at 297 to 327 forms a coiled coil; sequence IASSSSTENELARVSQNIDLLKNKLKEICGE.

This sequence belongs to the caulimoviridae movement protein family. In terms of assembly, homotrimer, through the coiled-coil domain. Interacts with VAP. May interact (via N-terminus) with host prenylated Rab acceptor protein 1D (PRA1D).

It is found in the host cell junction. The protein resides in the host plasmodesma. Transports viral genome to neighboring plant cells directly through plasmosdesmata, without any budding. The movement protein allows efficient cell to cell propagation, by bypassing the host cell wall barrier. Acts by forming tubules structures that increase the size exclusion limit (SEL) of plasmodesmata, thereby allowing viral ribonucleocapsids to spread directly to neighboring cells. The protein is Movement protein of Cauliflower mosaic virus (strain D/H) (CaMV).